Reading from the N-terminus, the 239-residue chain is tRNA1(Val) (adenine(37)-N6)-methyltransferase (239 aa).

Belongs to the methyltransferase superfamily. tRNA (adenine-N(6)-)-methyltransferase family.

The protein resides in the cytoplasm. The enzyme catalyses adenosine(37) in tRNA1(Val) + S-adenosyl-L-methionine = N(6)-methyladenosine(37) in tRNA1(Val) + S-adenosyl-L-homocysteine + H(+). Its function is as follows. Specifically methylates the adenine in position 37 of tRNA(1)(Val) (anticodon cmo5UAC). The sequence is that of tRNA1(Val) (adenine(37)-N6)-methyltransferase from Vibrio vulnificus (strain YJ016).